Here is a 950-residue protein sequence, read N- to C-terminus: Protocadherin alpha-3 (950 aa).

Residues methionine 1–glycine 29 form the signal peptide. Cadherin domains are found at residues glutamine 30–phenylalanine 133, proline 134–phenylalanine 242, glutamate 243–leucine 350, valine 351–phenylalanine 455, serine 456–leucine 565, and valine 581–alanine 678. Residues glutamine 30 to asparagine 697 are Extracellular-facing. Asparagine 257 and asparagine 265 each carry an N-linked (GlcNAc...) asparagine glycan. The N-linked (GlcNAc...) asparagine glycan is linked to asparagine 548. A helical transmembrane segment spans residues valine 698–tyrosine 718. Residues threonine 719–glutamine 950 lie on the Cytoplasmic side of the membrane. PXXP repeat units follow at residues proline 734–proline 737 and proline 774–proline 777. The 6 X 4 AA repeats of P-X-X-P stretch occupies residues proline 734 to proline 894. Disordered regions lie at residues proline 777–tryptophan 806, glycine 831–proline 856, and phenylalanine 869–glutamine 950. The span at serine 782–alanine 797 shows a compositional bias: basic and acidic residues. 4 PXXP repeats span residues proline 799 to proline 802, proline 832 to proline 835, proline 873 to proline 876, and proline 891 to proline 894. Positions aspartate 909–lysine 923 are enriched in basic and acidic residues.

It is found in the cell membrane. Its function is as follows. Potential calcium-dependent cell-adhesion protein. May be involved in the establishment and maintenance of specific neuronal connections in the brain. This is Protocadherin alpha-3 (PCDHA3) from Homo sapiens (Human).